The sequence spans 524 residues: 2-isopropylmalate synthase (524 aa).

The Pyruvate carboxyltransferase domain occupies Val12 to Thr274. Mn(2+) is bound by residues Asp21, His209, His211, and Asn245. The regulatory domain stretch occupies residues Lys398–Gly524.

This sequence belongs to the alpha-IPM synthase/homocitrate synthase family. LeuA type 1 subfamily. Homodimer. Requires Mn(2+) as cofactor.

It is found in the cytoplasm. The catalysed reaction is 3-methyl-2-oxobutanoate + acetyl-CoA + H2O = (2S)-2-isopropylmalate + CoA + H(+). The protein operates within amino-acid biosynthesis; L-leucine biosynthesis; L-leucine from 3-methyl-2-oxobutanoate: step 1/4. Functionally, catalyzes the condensation of the acetyl group of acetyl-CoA with 3-methyl-2-oxobutanoate (2-ketoisovalerate) to form 3-carboxy-3-hydroxy-4-methylpentanoate (2-isopropylmalate). The polypeptide is 2-isopropylmalate synthase (Rhodopseudomonas palustris (strain ATCC BAA-98 / CGA009)).